The primary structure comprises 576 residues: Proline--tRNA ligase (576 aa).

Belongs to the class-II aminoacyl-tRNA synthetase family. ProS type 1 subfamily. Homodimer.

Its subcellular location is the cytoplasm. It catalyses the reaction tRNA(Pro) + L-proline + ATP = L-prolyl-tRNA(Pro) + AMP + diphosphate. Its function is as follows. Catalyzes the attachment of proline to tRNA(Pro) in a two-step reaction: proline is first activated by ATP to form Pro-AMP and then transferred to the acceptor end of tRNA(Pro). As ProRS can inadvertently accommodate and process non-cognate amino acids such as alanine and cysteine, to avoid such errors it has two additional distinct editing activities against alanine. One activity is designated as 'pretransfer' editing and involves the tRNA(Pro)-independent hydrolysis of activated Ala-AMP. The other activity is designated 'posttransfer' editing and involves deacylation of mischarged Ala-tRNA(Pro). The misacylated Cys-tRNA(Pro) is not edited by ProRS. The sequence is that of Proline--tRNA ligase from Pelobacter propionicus (strain DSM 2379 / NBRC 103807 / OttBd1).